Here is a 405-residue protein sequence, read N- to C-terminus: MNHLPMPTFGPLAGVRVVFSGIEIAGPFAGQMFAEWGAEVIWIENVAWADTIRVQPNYPQLSRRNLHALSLNIFKDEGREAFLKLMETTDIFIEASKGPAFARRGITDEVLWEHNPKLVIAHLSGFGQYGTEEYTNLPAYNTIAQAFSGYLIQNGDVDQPMPAFPYTADYFSGMTATTAALAALHKVRETGKGESIDIAMYEVMLRMGQYFMMDYFNGGEICPRMTKGKDPYYAGCGLYKCADGYIVMELVGITQINECFKDIGLAHILGTPEVPEGTQLIHRVECPYGPLVEEKLDAWLATHTIAEVQARFAELNIACAKVLTIPELEGNPQYVARESITQWQTMDGRTCKGPNIMPKFKNNPGKIWRGMPSHGMDTAAILKNIGYSEADIKELVGKGLAKVED.

Positions 97 and 104 each coordinate CoA. Asp169 serves as the catalytic Nucleophile.

It belongs to the CoA-transferase III family. CaiB subfamily. As to quaternary structure, homodimer.

Its subcellular location is the cytoplasm. The enzyme catalyses crotonobetainyl-CoA + (R)-carnitine = crotonobetaine + (R)-carnitinyl-CoA. The catalysed reaction is 4-(trimethylamino)butanoyl-CoA + (R)-carnitine = (R)-carnitinyl-CoA + 4-(trimethylamino)butanoate. The protein operates within amine and polyamine metabolism; carnitine metabolism. Catalyzes the reversible transfer of the CoA moiety from gamma-butyrobetainyl-CoA to L-carnitine to generate L-carnitinyl-CoA and gamma-butyrobetaine. Is also able to catalyze the reversible transfer of the CoA moiety from gamma-butyrobetainyl-CoA or L-carnitinyl-CoA to crotonobetaine to generate crotonobetainyl-CoA. This is L-carnitine CoA-transferase from Salmonella enteritidis PT4 (strain P125109).